The following is a 143-amino-acid chain: Transcriptional regulator MraZ (143 aa).

2 consecutive SpoVT-AbrB domains span residues 5 to 47 (TYTP…PRAE) and 76 to 119 (TDEQ…DAAA).

It belongs to the MraZ family. In terms of assembly, forms oligomers.

The protein resides in the cytoplasm. Its subcellular location is the nucleoid. This chain is Transcriptional regulator MraZ, found in Mycobacterium sp. (strain JLS).